The following is a 186-amino-acid chain: ATP synthase subunit delta (186 aa).

Belongs to the ATPase delta chain family. In terms of assembly, F-type ATPases have 2 components, F(1) - the catalytic core - and F(0) - the membrane proton channel. F(1) has five subunits: alpha(3), beta(3), gamma(1), delta(1), epsilon(1). CF(0) has four main subunits: a(1), b(1), b'(1) and c(10-14). The alpha and beta chains form an alternating ring which encloses part of the gamma chain. F(1) is attached to F(0) by a central stalk formed by the gamma and epsilon chains, while a peripheral stalk is formed by the delta, b and b' chains.

Its subcellular location is the cell inner membrane. In terms of biological role, f(1)F(0) ATP synthase produces ATP from ADP in the presence of a proton or sodium gradient. F-type ATPases consist of two structural domains, F(1) containing the extramembraneous catalytic core and F(0) containing the membrane proton channel, linked together by a central stalk and a peripheral stalk. During catalysis, ATP synthesis in the catalytic domain of F(1) is coupled via a rotary mechanism of the central stalk subunits to proton translocation. Functionally, this protein is part of the stalk that links CF(0) to CF(1). It either transmits conformational changes from CF(0) to CF(1) or is implicated in proton conduction. This chain is ATP synthase subunit delta, found in Roseobacter denitrificans (strain ATCC 33942 / OCh 114) (Erythrobacter sp. (strain OCh 114)).